The following is a 638-amino-acid chain: Probable lysine-specific demethylase 4F (638 aa).

The region spanning 15–57 (IMTFYPTMEEFADFNTYVAYMESQGAHRAGLAKVIPPKEWKAR) is the JmjN domain. Tyr133 serves as a coordination point for 2-oxoglutarate. A JmjC domain is found at 143 to 309 (EESTKQWNLG…YGKVASQCSC (167 aa)). His189 and Glu191 together coordinate Fe cation. 2 residues coordinate 2-oxoglutarate: Asn199 and Lys207. Zn(2+) is bound by residues Cys235 and His241. Lys242 lines the 2-oxoglutarate pocket. His277 provides a ligand contact to Fe cation. Positions 307 and 309 each coordinate Zn(2+). A disordered region spans residues 426–474 (PCRGCGRGRGRGRGRGRRPRELGTEETTVQSAAKRRLSVGTGSRAPGRK). Basic residues predominate over residues 431 to 443 (GRGRGRGRGRGRR).

Belongs to the JHDM3 histone demethylase family. Fe(2+) serves as cofactor.

It localises to the nucleus. It carries out the reaction N(6),N(6),N(6)-trimethyl-L-lysyl(9)-[histone H3] + 2 2-oxoglutarate + 2 O2 = N(6)-methyl-L-lysyl(9)-[histone H3] + 2 formaldehyde + 2 succinate + 2 CO2. In terms of biological role, probable histone demethylase that specifically demethylates 'Lys-9' of histone H3, thereby playing a central role in histone code. The sequence is that of Probable lysine-specific demethylase 4F from Homo sapiens (Human).